Here is a 70-residue protein sequence, read N- to C-terminus: Large ribosomal subunit protein bL31 (70 aa).

Positions 16, 18, 38, and 41 each coordinate Zn(2+).

It belongs to the bacterial ribosomal protein bL31 family. Type A subfamily. As to quaternary structure, part of the 50S ribosomal subunit. The cofactor is Zn(2+).

Functionally, binds the 23S rRNA. This Bifidobacterium adolescentis (strain ATCC 15703 / DSM 20083 / NCTC 11814 / E194a) protein is Large ribosomal subunit protein bL31.